A 37-amino-acid chain; its full sequence is Cytochrome b6-f complex subunit 5 (37 aa).

The chain crosses the membrane as a helical span at residues 5-25 (LLSGIVLGLIPITLAGLFVTA).

The protein belongs to the PetG family. In terms of assembly, the 4 large subunits of the cytochrome b6-f complex are cytochrome b6, subunit IV (17 kDa polypeptide, PetD), cytochrome f and the Rieske protein, while the 4 small subunits are PetG, PetL, PetM and PetN. The complex functions as a dimer.

The protein localises to the plastid. Its subcellular location is the chloroplast thylakoid membrane. In terms of biological role, component of the cytochrome b6-f complex, which mediates electron transfer between photosystem II (PSII) and photosystem I (PSI), cyclic electron flow around PSI, and state transitions. PetG is required for either the stability or assembly of the cytochrome b6-f complex. The chain is Cytochrome b6-f complex subunit 5 from Chaetosphaeridium globosum (Charophycean green alga).